A 358-amino-acid chain; its full sequence is Magnesium-protoporphyrin IX monomethyl ester [oxidative] cyclase 3 (358 aa).

This sequence belongs to the AcsF family. It depends on Fe cation as a cofactor.

It catalyses the reaction Mg-protoporphyrin IX 13-monomethyl ester + 3 NADPH + 3 O2 + 2 H(+) = 3,8-divinyl protochlorophyllide a + 3 NADP(+) + 5 H2O. It participates in porphyrin-containing compound metabolism; chlorophyll biosynthesis (light-independent). Functionally, catalyzes the formation of the isocyclic ring in chlorophyll biosynthesis. Mediates the cyclase reaction, which results in the formation of divinylprotochlorophyllide (Pchlide) characteristic of all chlorophylls from magnesium-protoporphyrin IX 13-monomethyl ester (MgPMME). The polypeptide is Magnesium-protoporphyrin IX monomethyl ester [oxidative] cyclase 3 (Nostoc sp. (strain PCC 7120 / SAG 25.82 / UTEX 2576)).